The sequence spans 186 residues: Adenine phosphoribosyltransferase (186 aa).

The protein belongs to the purine/pyrimidine phosphoribosyltransferase family. Homodimer.

It is found in the cytoplasm. It catalyses the reaction AMP + diphosphate = 5-phospho-alpha-D-ribose 1-diphosphate + adenine. It functions in the pathway purine metabolism; AMP biosynthesis via salvage pathway; AMP from adenine: step 1/1. Its function is as follows. Catalyzes a salvage reaction resulting in the formation of AMP, that is energically less costly than de novo synthesis. The chain is Adenine phosphoribosyltransferase from Sulfurovum sp. (strain NBC37-1).